A 66-amino-acid chain; its full sequence is MDFTTLVIIGVYLLVFIVYFAKINTSMCTISISGASVEISGCDNPALFEILPNLKPFDHGLSVPSI.

The Lumenal portion of the chain corresponds to 1 to 2; the sequence is MD. The chain crosses the membrane as a helical span at residues 3 to 23; that stretch reads FTTLVIIGVYLLVFIVYFAKI. Residues 24 to 66 lie on the Cytoplasmic side of the membrane; that stretch reads NTSMCTISISGASVEISGCDNPALFEILPNLKPFDHGLSVPSI.

It belongs to the Tymovirales TGBp3 protein family.

The protein resides in the host endoplasmic reticulum membrane. Its function is as follows. Plays a role in viral cell-to-cell propagation, by facilitating genome transport to neighboring plant cells through plasmosdesmata. May induce the formation of granular vesicles derived from the Endoplasmic reticulum, which align on actin filaments. This chain is Movement protein TGBp3, found in Trifolium (WCMV).